The primary structure comprises 143 residues: Transcriptional regulator MraZ (143 aa).

SpoVT-AbrB domains are found at residues 5 to 47 and 76 to 119; these read THSP…SQKE and ASDE…DADA.

It belongs to the MraZ family. In terms of assembly, forms oligomers.

The protein resides in the cytoplasm. It localises to the nucleoid. In Paenarthrobacter aurescens (strain TC1), this protein is Transcriptional regulator MraZ.